Reading from the N-terminus, the 174-residue chain is Gamma-crystallin A (174 aa).

2 consecutive Beta/gamma crystallin 'Greek key' domains span residues Gly-2–Ser-40 and Gly-41–Pro-83. Residues Tyr-84 to Ser-87 are connecting peptide. 2 consecutive Beta/gamma crystallin 'Greek key' domains span residues His-88–Glu-128 and Gly-129–Met-171.

This sequence belongs to the beta/gamma-crystallin family.

Its function is as follows. Crystallins are the dominant structural components of the vertebrate eye lens. The chain is Gamma-crystallin A (Cryga) from Rattus norvegicus (Rat).